The primary structure comprises 307 residues: HPr kinase/phosphorylase (307 aa).

Residues H136 and K157 contribute to the active site. 151-158 is an ATP binding site; it reads GESGIGKS. S158 is a binding site for Mg(2+). The Proton acceptor; for phosphorylation activity. Proton donor; for dephosphorylation activity role is filled by D175. Residues 198–207 are important for the catalytic mechanism of both phosphorylation and dephosphorylation; the sequence is LEVRGMGIID. Position 199 (E199) interacts with Mg(2+). R240 is a catalytic residue. The interval 261–266 is important for the catalytic mechanism of dephosphorylation; it reads PIRPGR.

The protein belongs to the HPrK/P family. As to quaternary structure, homohexamer. It depends on Mg(2+) as a cofactor.

It catalyses the reaction [HPr protein]-L-serine + ATP = [HPr protein]-O-phospho-L-serine + ADP + H(+). It carries out the reaction [HPr protein]-O-phospho-L-serine + phosphate + H(+) = [HPr protein]-L-serine + diphosphate. Its function is as follows. Catalyzes the ATP- as well as the pyrophosphate-dependent phosphorylation of a specific serine residue in HPr, a phosphocarrier protein of the phosphoenolpyruvate-dependent sugar phosphotransferase system (PTS). HprK/P also catalyzes the pyrophosphate-producing, inorganic phosphate-dependent dephosphorylation (phosphorolysis) of seryl-phosphorylated HPr (P-Ser-HPr). The two antagonistic activities of HprK/P are regulated by several intracellular metabolites, which change their concentration in response to the absence or presence of rapidly metabolisable carbon sources (glucose, fructose, etc.) in the growth medium. Therefore, by controlling the phosphorylation state of HPr, HPrK/P is a sensor enzyme that plays a major role in the regulation of carbon metabolism and sugar transport: it mediates carbon catabolite repression (CCR), and regulates PTS-catalyzed carbohydrate uptake and inducer exclusion. This chain is HPr kinase/phosphorylase, found in Clostridium novyi (strain NT).